Here is a 483-residue protein sequence, read N- to C-terminus: Glutamyl-tRNA(Gln) amidotransferase subunit A (483 aa).

Catalysis depends on charge relay system residues K76 and S151. S175 (acyl-ester intermediate) is an active-site residue.

It belongs to the amidase family. GatA subfamily. Heterotrimer of A, B and C subunits.

It carries out the reaction L-glutamyl-tRNA(Gln) + L-glutamine + ATP + H2O = L-glutaminyl-tRNA(Gln) + L-glutamate + ADP + phosphate + H(+). In terms of biological role, allows the formation of correctly charged Gln-tRNA(Gln) through the transamidation of misacylated Glu-tRNA(Gln) in organisms which lack glutaminyl-tRNA synthetase. The reaction takes place in the presence of glutamine and ATP through an activated gamma-phospho-Glu-tRNA(Gln). This Pseudomonas putida (strain W619) protein is Glutamyl-tRNA(Gln) amidotransferase subunit A.